The following is a 572-amino-acid chain: Phenylalanine--tRNA ligase beta subunit (572 aa).

Residues 278–353 (LTPKEFEVEF…IAYGYNEIKP (76 aa)) enclose the B5 domain. The Mg(2+) site is built by D331, D337, E340, and D341.

It belongs to the phenylalanyl-tRNA synthetase beta subunit family. Type 2 subfamily. Tetramer of two alpha and two beta subunits. Mg(2+) serves as cofactor.

It localises to the cytoplasm. The enzyme catalyses tRNA(Phe) + L-phenylalanine + ATP = L-phenylalanyl-tRNA(Phe) + AMP + diphosphate + H(+). The chain is Phenylalanine--tRNA ligase beta subunit from Thermococcus onnurineus (strain NA1).